Reading from the N-terminus, the 97-residue chain is Large ribosomal subunit protein uL23 (97 aa).

Belongs to the universal ribosomal protein uL23 family. Part of the 50S ribosomal subunit. Contacts protein L29, and trigger factor when it is bound to the ribosome.

Functionally, one of the early assembly proteins it binds 23S rRNA. One of the proteins that surrounds the polypeptide exit tunnel on the outside of the ribosome. Forms the main docking site for trigger factor binding to the ribosome. The chain is Large ribosomal subunit protein uL23 from Sulfurihydrogenibium sp. (strain YO3AOP1).